The chain runs to 212 residues: Large ribosomal subunit protein uL3 (212 aa).

Positions 133–152 (RGSMGHGSKYHRRPGSLGAK) are disordered.

It belongs to the universal ribosomal protein uL3 family. In terms of assembly, part of the 50S ribosomal subunit. Forms a cluster with proteins L14 and L19.

Functionally, one of the primary rRNA binding proteins, it binds directly near the 3'-end of the 23S rRNA, where it nucleates assembly of the 50S subunit. The protein is Large ribosomal subunit protein uL3 of Syntrophomonas wolfei subsp. wolfei (strain DSM 2245B / Goettingen).